The chain runs to 541 residues: Chaperonin GroEL 2 (541 aa).

Residues Thr-29–Pro-32, Asp-86–Thr-90, Gly-413, Asn-476–Ala-478, and Asp-492 each bind ATP.

Belongs to the chaperonin (HSP60) family. As to quaternary structure, forms a cylinder of 14 subunits composed of two heptameric rings stacked back-to-back. Interacts with the co-chaperonin GroES.

The protein resides in the secreted. It is found in the capsule. Its subcellular location is the cell surface. It localises to the cell wall. The enzyme catalyses ATP + H2O + a folded polypeptide = ADP + phosphate + an unfolded polypeptide.. In terms of biological role, together with its co-chaperonin GroES, plays an essential role in assisting protein folding. The GroEL-GroES system forms a nano-cage that allows encapsulation of the non-native substrate proteins and provides a physical environment optimized to promote and accelerate protein folding. This chain is Chaperonin GroEL 2, found in Mycobacterium sp. (strain KMS).